The sequence spans 1575 residues: Ras GTPase-activating-like protein IQGAP2 (1575 aa).

A Phosphoserine modification is found at S16. One can recognise a Calponin-homology (CH) domain in the interval 41-156 (LCHLEEAKRW…YCIHALSLYL (116 aa)). The residue at position 356 (T356) is a Phosphothreonine. Residues 594–627 (VSSDGSWLKLNLHKKYDYYYNTDSKESSWVTPES) form the WW domain. Residues S595, S599, and S685 each carry the phosphoserine modification. IQ domains lie at 690-719 (QEENVVKIQAFWKGYKQRKEYMHRRQTFID), 720-749 (NTDSIVKIQSWFRMATARKSYLSRLQYFRD), and 750-779 (HNNEIVKIQSLLRANKARDDYKTLVGSENP). The residue at position 716 (T716) is a Phosphothreonine. Phosphothreonine occurs at positions 782, 881, 1002, and 1269. The Ras-GAP domain maps to 933 to 1182 (YLLLKLFKTA…QEFRKYFKEA (250 aa)). Residues S1271, S1279, S1358, and S1461 each carry the phosphoserine modification.

In terms of tissue distribution, isoform 2 expression is enhanced in testis.

Functionally, binds to activated CDC42 and RAC1 but does not seem to stimulate their GTPase activity. Associates with calmodulin. This is Ras GTPase-activating-like protein IQGAP2 (IQGAP2) from Homo sapiens (Human).